The primary structure comprises 264 residues: Mediator of RNA polymerase II transcription subunit 4 (264 aa).

The disordered stretch occupies residues leucine 183–phenylalanine 264. Basic and acidic residues predominate over residues asparagine 200 to aspartate 225. The segment covering alanine 236 to phenylalanine 264 has biased composition (acidic residues).

It belongs to the Mediator complex subunit 4 family. As to quaternary structure, component of the Mediator complex.

The protein resides in the nucleus. Its function is as follows. Component of the Mediator complex, a coactivator involved in the regulated transcription of nearly all RNA polymerase II-dependent genes. Mediator functions as a bridge to convey information from gene-specific regulatory proteins to the basal RNA polymerase II transcription machinery. Mediator is recruited to promoters by direct interactions with regulatory proteins and serves as a scaffold for the assembly of a functional preinitiation complex with RNA polymerase II and the general transcription factors. In Candida glabrata (strain ATCC 2001 / BCRC 20586 / JCM 3761 / NBRC 0622 / NRRL Y-65 / CBS 138) (Yeast), this protein is Mediator of RNA polymerase II transcription subunit 4 (MED4).